Consider the following 305-residue polypeptide: Acetyl-coenzyme A carboxylase carboxyl transferase subunit beta (305 aa).

Residues 23–292 form the CoA carboxyltransferase N-terminal domain; sequence GWLKCTHCNE…EENEPSPPPK (270 aa). Cys27, Cys30, Cys46, and Cys49 together coordinate Zn(2+). Residues 27 to 49 form a C4-type zinc finger; sequence CTHCNELIHANELEQNSNCCPKC. A disordered region spans residues 281–305; the sequence is FSEENEPSPPPKNLIKKTSPLKDKN.

The protein belongs to the AccD/PCCB family. As to quaternary structure, acetyl-CoA carboxylase is a heterohexamer composed of biotin carboxyl carrier protein (AccB), biotin carboxylase (AccC) and two subunits each of ACCase subunit alpha (AccA) and ACCase subunit beta (AccD). Zn(2+) serves as cofactor.

The protein localises to the cytoplasm. It catalyses the reaction N(6)-carboxybiotinyl-L-lysyl-[protein] + acetyl-CoA = N(6)-biotinyl-L-lysyl-[protein] + malonyl-CoA. The protein operates within lipid metabolism; malonyl-CoA biosynthesis; malonyl-CoA from acetyl-CoA: step 1/1. In terms of biological role, component of the acetyl coenzyme A carboxylase (ACC) complex. Biotin carboxylase (BC) catalyzes the carboxylation of biotin on its carrier protein (BCCP) and then the CO(2) group is transferred by the transcarboxylase to acetyl-CoA to form malonyl-CoA. The polypeptide is Acetyl-coenzyme A carboxylase carboxyl transferase subunit beta (Protochlamydia amoebophila (strain UWE25)).